A 179-amino-acid polypeptide reads, in one-letter code: Large ribosomal subunit protein uL16 (179 aa).

The disordered stretch occupies residues 147 to 179 (KASSASLANLDEDANSQTDDETSSSGSVATVES). Positions 156-168 (LDEDANSQTDDET) are enriched in acidic residues. Positions 169–179 (SSSGSVATVES) are enriched in polar residues.

This sequence belongs to the universal ribosomal protein uL16 family. As to quaternary structure, part of the 50S ribosomal subunit.

Functionally, binds 23S rRNA and is also seen to make contacts with the A and possibly P site tRNAs. This chain is Large ribosomal subunit protein uL16, found in Prochlorococcus marinus (strain MIT 9211).